The primary structure comprises 232 residues: MTNADPHELQKFSDLAHRWWDPNAEFKPLHDLNPVRLGWIDSHAHLAGKRALDIGCGGGILSESMAGLGAQVKGIDLSNEALGVADLHSLESGITVDYEAIAAEAIAEREPGSYDVVTCMEMLEHVPSPAGVVSACAKLVKPGGWVFFSTLNRNLKSYLFAVIGAEYIAQMLPKGTHDYARFIRPSELAGFVRATDLHIVELKGITYHPIGKRFALSNDTDINYLVACRRGA.

Positions 36, 55, 76, and 120 each coordinate S-adenosyl-L-methionine.

This sequence belongs to the methyltransferase superfamily. UbiG/COQ3 family.

It catalyses the reaction a 3-demethylubiquinol + S-adenosyl-L-methionine = a ubiquinol + S-adenosyl-L-homocysteine + H(+). It carries out the reaction a 3-(all-trans-polyprenyl)benzene-1,2-diol + S-adenosyl-L-methionine = a 2-methoxy-6-(all-trans-polyprenyl)phenol + S-adenosyl-L-homocysteine + H(+). It participates in cofactor biosynthesis; ubiquinone biosynthesis. In terms of biological role, O-methyltransferase that catalyzes the 2 O-methylation steps in the ubiquinone biosynthetic pathway. The chain is Ubiquinone biosynthesis O-methyltransferase from Burkholderia vietnamiensis (strain G4 / LMG 22486) (Burkholderia cepacia (strain R1808)).